Here is a 212-residue protein sequence, read N- to C-terminus: Transcription factor MYB8 (212 aa).

2 HTH myb-type domains span residues 9–61 (KAHM…INYL) and 62–116 (RPDL…KRKL). 2 consecutive DNA-binding regions (H-T-H motif) follow at residues 37–61 (WRSL…INYL) and 89–112 (WSLI…NTHI).

It is found in the nucleus. Its function is as follows. Transcription activator. This chain is Transcription factor MYB8, found in Arabidopsis thaliana (Mouse-ear cress).